The primary structure comprises 132 residues: Probable histone H2A.1 (132 aa).

A disordered region spans residues 1-22 (MAGRGKTLGSGSAKKATTRSSK).

Belongs to the histone H2A family. In terms of assembly, the nucleosome is a histone octamer containing two molecules each of H2A, H2B, H3 and H4 assembled in one H3-H4 heterotetramer and two H2A-H2B heterodimers. The octamer wraps approximately 147 bp of DNA. Not ubiquitinated. As to expression, low level of expression; mainly in roots. Found in the root cap cells and in non dividing tissues of the plant, including the root elongation and maturation zones and the leaf veins.

Its subcellular location is the nucleus. It is found in the chromosome. Core component of nucleosome. Nucleosomes wrap and compact DNA into chromatin, limiting DNA accessibility to the cellular machineries which require DNA as a template. Histones thereby play a central role in transcription regulation, DNA repair, DNA replication and chromosomal stability. DNA accessibility is regulated via a complex set of post-translational modifications of histones, also called histone code, and nucleosome remodeling. The protein is Probable histone H2A.1 of Arabidopsis thaliana (Mouse-ear cress).